The primary structure comprises 263 residues: Elongin-A (263 aa).

2 disordered regions span residues 112–147 and 170–263; these read KLEQ…YCPK and SATS…PKRI. 2 stretches are compositionally biased toward polar residues: residues 186–206 and 214–229; these read RSSS…NTYP and SFTS…VKTQ. The segment covering 230-245 has biased composition (low complexity); that stretch reads PSSSSSPSISRPTSFP. Polar residues predominate over residues 253–263; that stretch reads SRFSSQVPKRI.

Belongs to the ELA1 family. Heterodimer with elc1. Component of a CRL3 E3 ubiquitin ligase complex consisting of a cullin, the linker protein elc1, the substrate receptor pof4/ela1, and the RING protein rbx1. Interacts with skp1.

In terms of biological role, as part of the CRL3 E3 ubiquitin ligase complex; polyubiquitylates monoubiquitylated RNA polymerase II subunit rpb1 to trigger its proteolysis; plays a role in global genomic repair. The chain is Elongin-A (pof4) from Schizosaccharomyces pombe (strain 972 / ATCC 24843) (Fission yeast).